Reading from the N-terminus, the 767-residue chain is Protein NLP3 (767 aa).

Disordered stretches follow at residues 462–494, 590–622, and 646–672; these read ATPP…RKTK, INPT…CSSE, and HEDQ…KAKD. Residues 482-566 form the RWP-RK domain; it reads SASSLENRKR…MDSVEGVQGS (85 aa). Residues 485-506 are a coiled coil; the sequence is SLENRKRKTKAEKDITLDTLRQ. Composition is skewed to low complexity over residues 604–622 and 655–667; these read PSSS…CSSE and TSSL…ATTP. Residues 673–759 enclose the PB1 domain; it reads GMKVKAMFGD…ETIRILVHHP (87 aa).

It is found in the nucleus. Its function is as follows. Probable transcription factor. In Arabidopsis thaliana (Mouse-ear cress), this protein is Protein NLP3 (NLP3).